The primary structure comprises 179 residues: Fas apoptotic inhibitory molecule 1 (179 aa).

T2 carries the post-translational modification N-acetylthreonine.

It belongs to the FAIM1 family.

It is found in the cytoplasm. Its function is as follows. Plays a role as an inducible effector molecule that mediates Fas resistance produced by surface Ig engagement in B cells. The chain is Fas apoptotic inhibitory molecule 1 (FAIM) from Homo sapiens (Human).